Consider the following 297-residue polypeptide: Probable porphobilinogen deaminase (297 aa).

Residue cysteine 241 is modified to S-(dipyrrolylmethanemethyl)cysteine.

Belongs to the HMBS family. The cofactor is dipyrromethane.

It catalyses the reaction 4 porphobilinogen + H2O = hydroxymethylbilane + 4 NH4(+). Its pathway is porphyrin-containing compound metabolism; protoporphyrin-IX biosynthesis; coproporphyrinogen-III from 5-aminolevulinate: step 2/4. Functionally, tetrapolymerization of the monopyrrole PBG into the hydroxymethylbilane pre-uroporphyrinogen in several discrete steps. This chain is Probable porphobilinogen deaminase, found in Pyrobaculum arsenaticum (strain DSM 13514 / JCM 11321 / PZ6).